Reading from the N-terminus, the 252-residue chain is 5'-nucleotidase SurE (252 aa).

4 residues coordinate a divalent metal cation: D8, D9, S39, and N91.

The protein belongs to the SurE nucleotidase family. Requires a divalent metal cation as cofactor.

Its subcellular location is the cytoplasm. The enzyme catalyses a ribonucleoside 5'-phosphate + H2O = a ribonucleoside + phosphate. In terms of biological role, nucleotidase that shows phosphatase activity on nucleoside 5'-monophosphates. The chain is 5'-nucleotidase SurE from Variovorax paradoxus (strain S110).